Reading from the N-terminus, the 463-residue chain is Nitrate/nitrite antiporter NarK (463 aa).

The Cytoplasmic segment spans residues 1 to 37 (MSHSSAPERATGAVITDWRPEDPAFWQQRGQRIASRN). A helical transmembrane segment spans residues 38–59 (LWISVPCLLLAFCVWMLFSAVA). The Periplasmic segment spans residues 60-73 (VNLPKVGFNFTTDQ). The helical transmembrane segment at 74 to 95 (LFMLTALPSVSGALLRVPYSFM) threads the bilayer. Residue R89 participates in nitrate binding. Residue R89 participates in nitrite binding. Topologically, residues 96 to 102 (VPIFGGR) are cytoplasmic. The chain crosses the membrane as a helical span at residues 103 to 122 (RWTAFSTGILIIPCVWLGFA). Residues 123–130 (VQDTSTPY) lie on the Periplasmic side of the membrane. A helical transmembrane segment spans residues 131–151 (SVFIIISLLCGFAGANFASSM). The Cytoplasmic portion of the chain corresponds to 152-166 (ANISFFFPKQKQGGA). The chain crosses the membrane as a helical span at residues 167–189 (LGLNGGLGNMGVSVMQLVAPLVV). N175 contributes to the nitrate binding site. Residues 190 to 211 (SLSIFAVFGSQGVKQPDGTELY) lie on the Periplasmic side of the membrane. Residues 212–233 (LANASWIWVPFLAIFTIAAWFG) form a helical membrane-spanning segment. Over 234 to 253 (MNDLATSKASIKEQLPVLKR) the chain is Cytoplasmic. The chain crosses the membrane as a helical span at residues 254–281 (GHLWIMSLLYLATFGSFIGFSAGFAMLS). Y263 contacts nitrate. Residue Y263 coordinates nitrite. The Periplasmic segment spans residues 282-289 (KTQFPDVQ). Residues 290–312 (ILQYAFFGPFIGALARSAGGALS) traverse the membrane as a helical segment. At 313–316 (DRLG) the chain is on the cytoplasmic side. Residues 317-338 (GTRVTLVNFILMAIFSGLLFLT) traverse the membrane as a helical segment. Topologically, residues 339–347 (LPTDGQGGS) are periplasmic. Residues 348–373 (FMAFFAVFLALFLTAGLGSGSTFQMI) traverse the membrane as a helical segment. Residues 374-405 (SVIFRKLTMDRVKAEGGSDERAMREAATDTAA) are Cytoplasmic-facing. Residues 406-427 (ALGFISAIGAIGGFFIPKAFGS) traverse the membrane as a helical segment. Residue S411 participates in nitrate binding. Residues 428–435 (SLALTGSP) lie on the Periplasmic side of the membrane. The chain crosses the membrane as a helical span at residues 436–458 (VGAMKVFLIFYIACVVITWAVYG). Residues 459–463 (RHSKK) lie on the Cytoplasmic side of the membrane.

It belongs to the major facilitator superfamily. Nitrate/nitrite porter (TC 2.A.1.8) family.

It localises to the cell inner membrane. It catalyses the reaction nitrate(in) + nitrite(out) = nitrate(out) + nitrite(in). Functionally, catalyzes nitrate uptake, nitrite uptake and nitrite export across the cytoplasmic membrane. Functions as a nitrate/nitrite exchanger, and protons are unlikely to be co-transported. In Escherichia coli (strain K12), this protein is Nitrate/nitrite antiporter NarK.